The chain runs to 65 residues: Translational regulator CsrA (65 aa).

This sequence belongs to the CsrA/RsmA family. As to quaternary structure, homodimer; the beta-strands of each monomer intercalate to form a hydrophobic core, while the alpha-helices form wings that extend away from the core.

It localises to the cytoplasm. Its function is as follows. A translational regulator that binds mRNA to regulate translation initiation and/or mRNA stability. Usually binds in the 5'-UTR at or near the Shine-Dalgarno sequence preventing ribosome-binding, thus repressing translation. Its main target seems to be the major flagellin gene, while its function is anatagonized by FliW. The polypeptide is Translational regulator CsrA (Bordetella petrii (strain ATCC BAA-461 / DSM 12804 / CCUG 43448)).